We begin with the raw amino-acid sequence, 201 residues long: Imidazoleglycerol-phosphate dehydratase (201 aa).

This sequence belongs to the imidazoleglycerol-phosphate dehydratase family.

The protein localises to the cytoplasm. The catalysed reaction is D-erythro-1-(imidazol-4-yl)glycerol 3-phosphate = 3-(imidazol-4-yl)-2-oxopropyl phosphate + H2O. It functions in the pathway amino-acid biosynthesis; L-histidine biosynthesis; L-histidine from 5-phospho-alpha-D-ribose 1-diphosphate: step 6/9. This chain is Imidazoleglycerol-phosphate dehydratase, found in Prochlorococcus marinus (strain MIT 9515).